The sequence spans 329 residues: 4-hydroxythreonine-4-phosphate dehydrogenase (329 aa).

Substrate is bound by residues histidine 136 and threonine 137. Residues histidine 166, histidine 211, and histidine 266 each contribute to the a divalent metal cation site. Residues lysine 274, asparagine 283, and arginine 292 each coordinate substrate.

The protein belongs to the PdxA family. Homodimer. Requires Zn(2+) as cofactor. Mg(2+) is required as a cofactor. Co(2+) serves as cofactor.

The protein resides in the cytoplasm. The enzyme catalyses 4-(phosphooxy)-L-threonine + NAD(+) = 3-amino-2-oxopropyl phosphate + CO2 + NADH. Its pathway is cofactor biosynthesis; pyridoxine 5'-phosphate biosynthesis; pyridoxine 5'-phosphate from D-erythrose 4-phosphate: step 4/5. Catalyzes the NAD(P)-dependent oxidation of 4-(phosphooxy)-L-threonine (HTP) into 2-amino-3-oxo-4-(phosphooxy)butyric acid which spontaneously decarboxylates to form 3-amino-2-oxopropyl phosphate (AHAP). The sequence is that of 4-hydroxythreonine-4-phosphate dehydrogenase from Escherichia coli (strain K12 / MC4100 / BW2952).